A 1626-amino-acid polypeptide reads, in one-letter code: Collagen alpha-1(XXII) chain (1626 aa).

An N-terminal signal peptide occupies residues methionine 1–alanine 27. Residues aspartate 38–leucine 213 enclose the VWFA domain. Residues glycine 239 to serine 427 form the Laminin G-like domain. N-linked (GlcNAc...) asparagine glycosylation is present at asparagine 375. Collagen-like domains are found at residues glycine 481 to glycine 520, glutamine 526 to valine 565, glycine 566 to serine 625, glycine 657 to glycine 708, glycine 714 to arginine 773, glycine 774 to lysine 833, glycine 868 to glycine 922, glycine 925 to glycine 984, alanine 1047 to proline 1095, proline 1118 to proline 1155, glycine 1156 to proline 1215, glycine 1249 to aspartate 1308, glycine 1315 to lysine 1374, glycine 1387 to proline 1446, serine 1495 to proline 1550, and aspartate 1575 to glutamine 1604. Disordered stretches follow at residues proline 506–glycine 1002, glycine 1019–proline 1103, proline 1119–serine 1458, and tyrosine 1491–glutamine 1609. Over residues aspartate 544–proline 553 the composition is skewed to basic and acidic residues. Positions glutamine 571–proline 580 are enriched in pro residues. Basic and acidic residues predominate over residues glutamate 591–leucine 606. Positions alanine 661–alanine 670 are enriched in low complexity. 2 stretches are compositionally biased toward pro residues: residues proline 715 to glycine 728 and lysine 742 to proline 751. Composition is skewed to basic and acidic residues over residues glutamate 769–leucine 778 and arginine 815–glutamate 826. The span at alanine 908 to proline 939 shows a compositional bias: low complexity. Residues proline 945–alanine 957 show a composition bias toward basic and acidic residues. Low complexity-rich tracts occupy residues glutamate 959–alanine 974 and proline 1056–arginine 1065. Basic and acidic residues-rich tracts occupy residues lysine 1131–glutamate 1151 and arginine 1173–glutamine 1185. The segment covering alanine 1205 to lysine 1223 has biased composition (low complexity). The span at glutamate 1241 to lysine 1250 shows a compositional bias: basic and acidic residues. Over residues alanine 1260 to proline 1275 the composition is skewed to low complexity. A compositionally biased stretch (low complexity) spans lysine 1379–proline 1389. Positions phenylalanine 1391–lysine 1404 are enriched in basic and acidic residues. The span at glycine 1405–glycine 1414 shows a compositional bias: gly residues. A compositionally biased stretch (pro residues) spans valine 1440–proline 1449. The span at glycine 1521–glycine 1530 shows a compositional bias: gly residues. Over residues leucine 1595 to glutamine 1604 the composition is skewed to pro residues.

This sequence belongs to the fibril-associated collagens with interrupted helices (FACIT) family. As to expression, restrictive expression is observed at tissue junctions such as the myotendinous junction in skeletal and heart muscle, the articular cartilage-synovial fluid junction, or the border between the anagen hair follicle and the dermis in the skin. It is deposited in the basement membrane zone of the myotendinous junction and the hair follicle and associated with the extrafibrillar matrix in cartilage.

It localises to the secreted. The protein localises to the extracellular space. The protein resides in the extracellular matrix. It is found in the cytoplasm. In terms of biological role, acts as a cell adhesion ligand for skin epithelial cells and fibroblasts. The protein is Collagen alpha-1(XXII) chain (COL22A1) of Homo sapiens (Human).